The chain runs to 313 residues: E3 ubiquitin-protein ligase RNF126 (313 aa).

Ala-2 carries the post-translational modification N-acetylalanine. A Phosphoserine modification is found at Ser-5. The tract at residues 5–101 (SPQPGRYFCH…FEIPTFPPGA (97 aa)) is required for interaction with BAG6. Residues Cys-13, Cys-16, Cys-29, and Cys-32 each contribute to the Zn(2+) site. The C4-type zinc-finger motif lies at 13-32 (CHCCSVEIVPRLPDYICPRC). Disordered regions lie at residues 42–64 (EETRSAENGSAPSTASADQSRQQ) and 96–128 (TFPPGAQADDSRDPESRREREQHSRHRYGARQP). Positions 47 to 64 (AENGSAPSTASADQSRQQ) are enriched in polar residues. Over residues 104 to 117 (DDSRDPESRREREQ) the composition is skewed to basic and acidic residues. The span at 118 to 128 (HSRHRYGARQP) shows a compositional bias: basic residues. The segment at 203 to 306 (TGPPPADKEK…SSSSSSSPGN (104 aa)) is sufficient for interaction with AICDA. The RING-type zinc finger occupies 232-273 (CPVCKDDYGLGEHVRQLPCNHLFHDGCIVPWLEQHDSCPVCR). Positions 280 to 313 (NTATDPPGLAGVSFSSSSSSSSSSPGNENPASSS) are disordered. The segment covering 292–313 (SFSSSSSSSSSSPGNENPASSS) has biased composition (low complexity).

Interacts with CCDC50, EGFR, FLT3 and SCAMP3. Interacts with BAG6 (via ubiquitin-like domain); required for BAG6-dependent ubiquitination of proteins mislocalized to the cytosol. Interacts with CDKN1A. Interacts with AICDA. Post-translationally, ubiquitinated. May undergo autoubiquitination.

The protein localises to the cytoplasm. The protein resides in the nucleus. It catalyses the reaction S-ubiquitinyl-[E2 ubiquitin-conjugating enzyme]-L-cysteine + [acceptor protein]-L-lysine = [E2 ubiquitin-conjugating enzyme]-L-cysteine + N(6)-ubiquitinyl-[acceptor protein]-L-lysine.. The protein operates within protein modification; protein ubiquitination. E3 ubiquitin-protein ligase that mediates ubiquitination oF target proteins. Depending on the associated E2 ligase, mediates 'Lys-27'-, 'Lys-29'-, 'Lys-48'- and/or 'Lys-63'-linked polyubiquitination of substrates. Part of a BAG6-dependent quality control process ensuring that proteins of the secretory pathway that are mislocalized to the cytosol are degraded by the proteasome. Probably acts by providing the ubiquitin ligase activity associated with the BAG6 complex and be responsible for ubiquitination of the hydrophobic mislocalized proteins and their targeting to the proteasome. May also play a role in the endosomal recycling of IGF2R, the cation-independent mannose-6-phosphate receptor. May play a role in the endosomal sorting and degradation of several membrane receptors including EGFR, FLT3, MET and CXCR4, by mediating their ubiquitination. By ubiquitinating CDKN1A/p21 and targeting it for degradation, may also promote cell proliferation. May monoubiquitinate AICDA. Acts as a regulator of DNA repair by mediating 'Lys-27'- and 'Lys-29'-linked polyubiquitination of MRE11, thereby promoting the exonuclease activity of MRE11. In Bos taurus (Bovine), this protein is E3 ubiquitin-protein ligase RNF126.